Here is a 76-residue protein sequence, read N- to C-terminus: Acyl carrier protein (76 aa).

The region spanning 1–76 is the Carrier domain; that stretch reads MSLEEKVKNI…DVIEYIKAHT (76 aa). O-(pantetheine 4'-phosphoryl)serine is present on Ser36.

This sequence belongs to the acyl carrier protein (ACP) family. Post-translationally, 4'-phosphopantetheine is transferred from CoA to a specific serine of apo-ACP by AcpS. This modification is essential for activity because fatty acids are bound in thioester linkage to the sulfhydryl of the prosthetic group.

It localises to the cytoplasm. The protein operates within lipid metabolism; fatty acid biosynthesis. Functionally, carrier of the growing fatty acid chain in fatty acid biosynthesis. The chain is Acyl carrier protein from Desulfatibacillum aliphaticivorans.